Here is a 74-residue protein sequence, read N- to C-terminus: Conotoxin ArMKLT2-041 (74 aa).

The N-terminal stretch at 1–22 (MKLTCVLIVAVLFLTACQLIAA) is a signal peptide. Residues 23–46 (DDSRDLQKFPRRKMRDGMLNTKNT) constitute a propeptide that is removed on maturation. Residue Gln49 is modified to Pyrrolidone carboxylic acid. 3 cysteine pairs are disulfide-bonded: Cys50–Cys65, Cys57–Cys68, and Cys64–Cys73.

This sequence belongs to the conotoxin O1 superfamily. Expressed by the venom duct.

The protein resides in the secreted. This Conus arenatus (Sand-dusted cone) protein is Conotoxin ArMKLT2-041.